A 560-amino-acid chain; its full sequence is Dihydroxy-acid dehydratase (560 aa).

D78 lines the Mg(2+) pocket. C119 is a binding site for [2Fe-2S] cluster. Mg(2+) contacts are provided by D120 and K121. K121 is subject to N6-carboxylysine. C192 is a binding site for [2Fe-2S] cluster. E446 serves as a coordination point for Mg(2+). S472 serves as the catalytic Proton acceptor.

This sequence belongs to the IlvD/Edd family. In terms of assembly, homodimer. [2Fe-2S] cluster serves as cofactor. Mg(2+) is required as a cofactor.

It catalyses the reaction (2R)-2,3-dihydroxy-3-methylbutanoate = 3-methyl-2-oxobutanoate + H2O. It carries out the reaction (2R,3R)-2,3-dihydroxy-3-methylpentanoate = (S)-3-methyl-2-oxopentanoate + H2O. It participates in amino-acid biosynthesis; L-isoleucine biosynthesis; L-isoleucine from 2-oxobutanoate: step 3/4. The protein operates within amino-acid biosynthesis; L-valine biosynthesis; L-valine from pyruvate: step 3/4. Its function is as follows. Functions in the biosynthesis of branched-chain amino acids. Catalyzes the dehydration of (2R,3R)-2,3-dihydroxy-3-methylpentanoate (2,3-dihydroxy-3-methylvalerate) into 2-oxo-3-methylpentanoate (2-oxo-3-methylvalerate) and of (2R)-2,3-dihydroxy-3-methylbutanoate (2,3-dihydroxyisovalerate) into 2-oxo-3-methylbutanoate (2-oxoisovalerate), the penultimate precursor to L-isoleucine and L-valine, respectively. The sequence is that of Dihydroxy-acid dehydratase from Anaeromyxobacter sp. (strain K).